We begin with the raw amino-acid sequence, 197 residues long: Rac-like GTP-binding protein 5 (197 aa).

13–20 (GDGAVGKT) serves as a coordination point for GTP. The Effector region signature appears at 35-43 (YVPTVFDNF). GTP is bound by residues 60-64 (DTAGQ) and 118-121 (TKLD). Cysteine 194 is subject to Cysteine methyl ester. The S-geranylgeranyl cysteine moiety is linked to residue cysteine 194. Positions 195 to 197 (AIL) are cleaved as a propeptide — removed in mature form.

The protein belongs to the small GTPase superfamily. Rho family.

It is found in the cytoplasm. The protein localises to the membrane. Its function is as follows. Inactive GDP-bound Rho GTPases reside in the cytosol, are found in a complex with Rho GDP-dissociation inhibitors (Rho GDIs), and are released from the GDI protein in order to translocate to membranes upon activation. The chain is Rac-like GTP-binding protein 5 (RAC5) from Oryza sativa subsp. japonica (Rice).